The following is a 424-amino-acid chain: Myb family transcription factor RLI1 (424 aa).

Residues 144–165 (RPQKRDSGERTPLPPPSQQQHQ) form a disordered region. The HTH myb-type domain maps to 238-298 (APSKTRIRWT…HLQKYRIAKY (61 aa)). The H-T-H motif DNA-binding region spans 269-294 (PKGILKLMNSDGLTIYHIKSHLQKYR). A coiled-coil region spans residues 326–391 (MQITEALRVQ…ELDDVVAFAA (66 aa)). Residues 342-347 (LHEQLE) carry the LHEQLE motif.

The protein belongs to the MYB-CC family. In terms of assembly, interacts with SPX1 and SPX2 in the nucleus; these interactions prevent binding to the promoters of target genes, thus regulating negatively leaf inclination in response to phosphate (Pi) starvation. Homodimer. Interacts with PHR2 in the nucleus. As to expression, mostly expressed in roots and leaves blades and, to a lower extent, in leaves sheaths, culms and panicles. Localized in leaves lamina joints. Expressed equally in shoots and roots. In terms of tissue distribution, mostly expressed in shoots and, to a lower extent, in roots.

Its subcellular location is the nucleus. In terms of biological role, transcription factor binding to specific DNA sequences of target genes promoters, such as the motif R1BS 5'-NAKATNCN-3' and the motif P1BS 5'-GNATATNC-3' to trigger their expression. Nitrate-induced component involved in modulating phosphate (Pi) response and homeostasis together with PHR2; activates directly the expression of Pi starvation-induced (PSI) genes upon nitrate disponibility, thus triggering the nitrate-induced phosphate response (NIPR) promoting Pi uptake activity. Functionally, binds preferentially to the P1BS motif 5'-GNATATNC-3' in target genes promoters. Binds preferentially to the R1BS motif 5'-NAKATNCN-3' in target genes promoters, including several genes involved in the plant hormone signal transduction pathway. Involved in the shoot architecture; positively regulates leaf inclination by affecting lamina joint cell elongation via the direct promotion of ILI4/BU1 and BC1 genes expression, especially in response to phosphate (Pi) availability. Regulates both brassinolide (BL) biosynthesis and signaling by directly activating BL-biosynthesis and signaling genes. The protein is Myb family transcription factor RLI1 of Oryza sativa subsp. japonica (Rice).